A 343-amino-acid chain; its full sequence is MAMVSEFLKQAWFMEHQEQEYIKSVKGGPVVPQQQPNFDPSADVVALEKAMTAKGVDEATIIDIMTKRTNAQRHRIKAAYQKAKGKSLEEAMKRVLKSHLEDVVVALLKTPAQFDAEELRACMKGLGTDEDTLIEILASRSNKEIREASRYYKEVLKRDLTQDIISDTSGHFQKALVVLAKGDRCEDPHVNDDLADNDARALYEAGEQKKGTDVNVFVTVLTARSYPHLRRVFQKYTKYSKHDMNKVVDMELKGDIEKCLTALVKCATSKPAFFAEKLHLAMKGFGTRHKDLIRIMVSRHEVDMNEIKCYYKKMYGISLCQAIMDDLKGDYETILVALCGSDN.

Residue Gln-19 forms an Isoglutamyl lysine isopeptide (Gln-Lys) (interchain with K-?) linkage. At Tyr-21 the chain carries Phosphotyrosine; by EGFR; in vitro. Ser-24 is subject to Phosphoserine; by PKC; in vitro. Annexin repeat units lie at residues 38–109 (FDPS…ALLK), 110–181 (TPAQ…VLAK), 193–265 (DLAD…ALVK), and 269–340 (SKPA…ALCG).

Belongs to the annexin family. Post-translationally, phosphorylated by protein kinase C and epidermal growth factor receptor/kinase. The N-terminus is blocked.

It localises to the nucleus. It is found in the cytoplasm. The protein localises to the cell projection. The protein resides in the cilium. Its subcellular location is the basolateral cell membrane. In terms of biological role, calcium/phospholipid-binding protein which promotes membrane fusion and is involved in exocytosis. This protein regulates phospholipase A2 activity. It seems to bind from two to four calcium ions with high affinity. The sequence is that of Annexin A1 isoform p37 (CP37) from Columba livia (Rock dove).